The primary structure comprises 148 residues: UPF0260 protein KPN78578_22800 (148 aa).

This sequence belongs to the UPF0260 family.

The polypeptide is UPF0260 protein KPN78578_22800 (Klebsiella pneumoniae subsp. pneumoniae (strain ATCC 700721 / MGH 78578)).